The primary structure comprises 180 residues: ADP-ribosylation factor-like protein 1 (180 aa).

The N-myristoyl glycine moiety is linked to residue Gly-2. Residues 23 to 30 (GLDGAGKT), 66 to 70 (DLGGQ), and 125 to 128 (NKQD) contribute to the GTP site.

This sequence belongs to the small GTPase superfamily. Arf family. As to expression, expressed in neuronal cells. Expression in hypodermal tissues is absent.

It is found in the golgi apparatus. The protein localises to the cytoplasm. It localises to the cytoplasmic granule. Functionally, GTP-binding protein that may be involved in protein trafficking; may modulate vesicle budding and uncoating within the Golgi apparatus. Plays a role in male tail tip morphogenesis. This Caenorhabditis elegans protein is ADP-ribosylation factor-like protein 1.